Consider the following 357-residue polypeptide: Metacaspase-3 (357 aa).

The active site involves H168. 3 residues coordinate Ca(2+): D183, D199, and D200. Residue C223 is part of the active site. D230 provides a ligand contact to Ca(2+).

Belongs to the peptidase C14B family.

Its subcellular location is the recycling endosome. Its activity is regulated as follows. Activated by Ca(2+). Functionally, cysteine protease that cleaves specifically after arginine or lysine residues. In the bloodstream form, may cleave inactive metacaspase-4 MCA4 prior to MCA4 secretion. In Trypanosoma brucei brucei, this protein is Metacaspase-3.